A 206-amino-acid polypeptide reads, in one-letter code: Dephospho-CoA kinase (206 aa).

The 197-residue stretch at 4-200 (IVALTGGIGS…HRYLKLATAA (197 aa)) folds into the DPCK domain. 12–17 (GSGKST) contributes to the ATP binding site.

It belongs to the CoaE family.

It localises to the cytoplasm. The catalysed reaction is 3'-dephospho-CoA + ATP = ADP + CoA + H(+). The protein operates within cofactor biosynthesis; coenzyme A biosynthesis; CoA from (R)-pantothenate: step 5/5. Functionally, catalyzes the phosphorylation of the 3'-hydroxyl group of dephosphocoenzyme A to form coenzyme A. In Yersinia pestis, this protein is Dephospho-CoA kinase.